Consider the following 368-residue polypeptide: Cell division protein FtsZ 1 (368 aa).

GTP contacts are provided by residues 52-56 (GGGCN), 139-141 (GTG), glutamate 170, arginine 174, and aspartate 217.

Belongs to the FtsZ family. Homodimer. Polymerizes to form a dynamic ring structure in a strictly GTP-dependent manner. Interacts directly with several other division proteins.

The protein resides in the cytoplasm. In terms of biological role, essential cell division protein that forms a contractile ring structure (Z ring) at the future cell division site. The regulation of the ring assembly controls the timing and the location of cell division. One of the functions of the FtsZ ring is to recruit other cell division proteins to the septum to produce a new cell wall between the dividing cells. Binds GTP and shows GTPase activity. The chain is Cell division protein FtsZ 1 from Archaeoglobus fulgidus (strain ATCC 49558 / DSM 4304 / JCM 9628 / NBRC 100126 / VC-16).